The chain runs to 667 residues: Acetolactate synthase 1, chloroplastic (667 aa).

Over residues 1–35 the composition is skewed to low complexity; that stretch reads MAAAAPSPSSSAFSKTLSPSSSTSSTLLPRSTFPF. Positions 1 to 45 are disordered; that stretch reads MAAAAPSPSSSAFSKTLSPSSSTSSTLLPRSTFPFPHHPHKTTPP. Residues 1–94 constitute a chloroplast transit peptide; sequence MAAAAPSPSS…VSRFAPDEPR (94 aa). E141 serves as a coordination point for thiamine diphosphate. An intrachain disulfide couples C161 to C307. FAD contacts are provided by residues R243, 349–370, and 392–411; these read HGTVYANYAVDSSDLLLAFGVR and DIDSAEIGKNKQPHVSICAD. Positions 484–564 are thiamine pyrophosphate binding; that stretch reads QHQMWAAQYY…VKIMLLNNQH (81 aa). Mg(2+) is bound by residues D535 and N562.

It belongs to the TPP enzyme family. Requires Mg(2+) as cofactor. Thiamine diphosphate is required as a cofactor.

Its subcellular location is the plastid. The protein resides in the chloroplast. It catalyses the reaction 2 pyruvate + H(+) = (2S)-2-acetolactate + CO2. It participates in amino-acid biosynthesis; L-isoleucine biosynthesis; L-isoleucine from 2-oxobutanoate: step 1/4. The protein operates within amino-acid biosynthesis; L-valine biosynthesis; L-valine from pyruvate: step 1/4. In Nicotiana tabacum (Common tobacco), this protein is Acetolactate synthase 1, chloroplastic (ALS SURA).